The sequence spans 467 residues: Glutamate--tRNA ligase (467 aa).

The 'HIGH' region motif lies at Pro9–Gly19. The short motif at Lys237 to Arg241 is the 'KMSKS' region element. Position 240 (Lys240) interacts with ATP.

The protein belongs to the class-I aminoacyl-tRNA synthetase family. Glutamate--tRNA ligase type 1 subfamily. As to quaternary structure, monomer.

Its subcellular location is the cytoplasm. It catalyses the reaction tRNA(Glu) + L-glutamate + ATP = L-glutamyl-tRNA(Glu) + AMP + diphosphate. In terms of biological role, catalyzes the attachment of glutamate to tRNA(Glu) in a two-step reaction: glutamate is first activated by ATP to form Glu-AMP and then transferred to the acceptor end of tRNA(Glu). The sequence is that of Glutamate--tRNA ligase from Stenotrophomonas maltophilia (strain R551-3).